We begin with the raw amino-acid sequence, 265 residues long: Urease accessory protein UreH (265 aa).

Belongs to the UreD family. UreH, UreF and UreG form a complex that acts as a GTP-hydrolysis-dependent molecular chaperone, activating the urease apoprotein by helping to assemble the nickel containing metallocenter of UreC. The UreE protein probably delivers the nickel.

It is found in the cytoplasm. Its function is as follows. Required for maturation of urease via the functional incorporation of the urease nickel metallocenter. This chain is Urease accessory protein UreH, found in Helicobacter pylori (strain G27).